We begin with the raw amino-acid sequence, 155 residues long: MSIDVANESGVPADEERLARLARYILDALRVHPLAELSVLLVDEEPMADLHVRWMNEPGPTDVLSFPMDELRPGAPGRTSEPGILGDVVICPQVAARQAERAGHSMQDEIDLLCTHGILHLLGYDHAEPDEHREMFSLQNELLAGWRRSLEEEER.

Residues His-116, His-120, and His-126 each contribute to the Zn(2+) site.

This sequence belongs to the endoribonuclease YbeY family. It depends on Zn(2+) as a cofactor.

The protein localises to the cytoplasm. Its function is as follows. Single strand-specific metallo-endoribonuclease involved in late-stage 70S ribosome quality control and in maturation of the 3' terminus of the 16S rRNA. The chain is Endoribonuclease YbeY from Thermobifida fusca (strain YX).